Reading from the N-terminus, the 106-residue chain is SDO1-like protein C21C3.19 (106 aa).

The protein belongs to the SDO1-like family.

Its subcellular location is the cytoplasm. It is found in the nucleus. May play a role in RNA metabolism. This is SDO1-like protein C21C3.19 from Schizosaccharomyces pombe (strain 972 / ATCC 24843) (Fission yeast).